A 450-amino-acid chain; its full sequence is Bifunctional protein GlmU (450 aa).

Residues 1–228 are pyrophosphorylase; that stretch reads MKTALVILAA…ESETLGINSR (228 aa). Residues 8 to 11, Lys-22, Gln-75, and 80 to 81 contribute to the UDP-N-acetyl-alpha-D-glucosamine site; these read LAAG and GT. Residue Asp-105 coordinates Mg(2+). Residues Gly-140, Glu-154, Asn-169, and Asn-226 each coordinate UDP-N-acetyl-alpha-D-glucosamine. Asn-226 lines the Mg(2+) pocket. Residues 229–249 form a linker region; that stretch reads TELSAAEAAFQERARTNAFEN. Positions 250-450 are N-acetyltransferase; sequence GVTLPAPGTV…AKKAKQQRGS (201 aa). Arg-315 and Lys-333 together coordinate UDP-N-acetyl-alpha-D-glucosamine. The Proton acceptor role is filled by His-345. Residues Tyr-348 and Asn-359 each contribute to the UDP-N-acetyl-alpha-D-glucosamine site. Acetyl-CoA-binding positions include Ala-362, 368 to 369, Ser-387, Ser-405, and Arg-422; that span reads NY.

The protein in the N-terminal section; belongs to the N-acetylglucosamine-1-phosphate uridyltransferase family. In the C-terminal section; belongs to the transferase hexapeptide repeat family. Homotrimer. Mg(2+) serves as cofactor.

The protein resides in the cytoplasm. The enzyme catalyses alpha-D-glucosamine 1-phosphate + acetyl-CoA = N-acetyl-alpha-D-glucosamine 1-phosphate + CoA + H(+). It catalyses the reaction N-acetyl-alpha-D-glucosamine 1-phosphate + UTP + H(+) = UDP-N-acetyl-alpha-D-glucosamine + diphosphate. Its pathway is nucleotide-sugar biosynthesis; UDP-N-acetyl-alpha-D-glucosamine biosynthesis; N-acetyl-alpha-D-glucosamine 1-phosphate from alpha-D-glucosamine 6-phosphate (route II): step 2/2. The protein operates within nucleotide-sugar biosynthesis; UDP-N-acetyl-alpha-D-glucosamine biosynthesis; UDP-N-acetyl-alpha-D-glucosamine from N-acetyl-alpha-D-glucosamine 1-phosphate: step 1/1. It participates in bacterial outer membrane biogenesis; LPS lipid A biosynthesis. Functionally, catalyzes the last two sequential reactions in the de novo biosynthetic pathway for UDP-N-acetylglucosamine (UDP-GlcNAc). The C-terminal domain catalyzes the transfer of acetyl group from acetyl coenzyme A to glucosamine-1-phosphate (GlcN-1-P) to produce N-acetylglucosamine-1-phosphate (GlcNAc-1-P), which is converted into UDP-GlcNAc by the transfer of uridine 5-monophosphate (from uridine 5-triphosphate), a reaction catalyzed by the N-terminal domain. The chain is Bifunctional protein GlmU from Roseobacter denitrificans (strain ATCC 33942 / OCh 114) (Erythrobacter sp. (strain OCh 114)).